Here is a 319-residue protein sequence, read N- to C-terminus: tRNA uridine(34) hydroxylase (319 aa).

The Rhodanese domain maps to 127–221 (KQEDTVIIDA…YGKDPEVQGE (95 aa)). C181 acts as the Cysteine persulfide intermediate in catalysis.

The protein belongs to the TrhO family.

The catalysed reaction is uridine(34) in tRNA + AH2 + O2 = 5-hydroxyuridine(34) in tRNA + A + H2O. Functionally, catalyzes oxygen-dependent 5-hydroxyuridine (ho5U) modification at position 34 in tRNAs. The polypeptide is tRNA uridine(34) hydroxylase (Bacillus thuringiensis (strain Al Hakam)).